The sequence spans 108 residues: Replication initiation control protein YabA (108 aa).

Zn(2+) contacts are provided by His-83, Cys-85, Cys-99, and Cys-102.

The protein belongs to the YabA family. Homotetramer. Interacts with both DnaA and DnaN, acting as a bridge between these two proteins. Zn(2+) serves as cofactor.

Its subcellular location is the cytoplasm. The protein localises to the nucleoid. In terms of biological role, involved in control of chromosome replication initiation. Inhibits the cooperative binding of DnaA to the oriC region, thus negatively regulating initiation of chromosome replication. Inhibits the ability of DnaA-ATP to form a helix on DNA; does not disassemble preformed DnaA-DNA helices. Decreases the residence time of DnaA on the chromosome at its binding sites (oriC, replication forks and promoter-binding sites). Tethers DnaA to the replication machinery via the DNA polymerase beta sliding clamp subunit (dnaN). Associates with oriC and other DnaA targets on the chromosome in a DnaA-dependent manner. This Lactococcus lactis subsp. lactis (strain IL1403) (Streptococcus lactis) protein is Replication initiation control protein YabA.